The sequence spans 92 residues: UPF0298 protein BH2594 (92 aa).

This sequence belongs to the UPF0298 family.

It localises to the cytoplasm. The protein is UPF0298 protein BH2594 of Halalkalibacterium halodurans (strain ATCC BAA-125 / DSM 18197 / FERM 7344 / JCM 9153 / C-125) (Bacillus halodurans).